The following is a 71-amino-acid chain: Protein KleB (71 aa).

A DNA-binding region (H-T-H motif) is located at residues 9 to 28; that stretch reads IETCCRRCGKSIRTLSHTII.

The chain is Protein KleB (kleB) from Escherichia coli.